A 580-amino-acid chain; its full sequence is MSERTFNWKNKDIRAQVDVVDSKLLPTLLLRNALVLNPYVKQWLKKNIWIYQDRIVYVGHELPNRAEEIHTIDCEGKYIVPGYIEPHAHPFQIYNPQTLAEYVSQYGTTTFVNDNLFLLLQSGKKKALTILNELKKQPVQYFWWSRYDLQTEVLNEDHVLPFDVRKQWIEHPDVIQGGEMTGWPRLVDGDDLMLHCMQATKKQRKRIEGHFPGASDKTLTKMKLFGADCDHEAMTGDEVMRRLELGYYVSLRNSSIRPDVRKILQELHEKGFRYYDHFFYTTDGATPNFYKGGMTNELIRIALEEGVPAIDAYNMASFNIAKYYQMDDYLGVVGPGRLASLNILEDPLNPNPVTVLSKGTILRENGCDLKAFTKTDWHKGGLVPLELSYDMTMDDLQFSMPMGVKMRNAVIMEPYMIEIDNSMEQLSFDHDESYLTMLDRHGKWRVNTMIKGFASSVQGFVSSFTTTGDIVAIGKNKADMLLAFARMKEIGGGIVLAENGNILHEIPLALCGCASSEAYEDVLEKEQKLRDLLTERGYEFCDPIYTLLFLQSTHLPYIRITPRGIFDVMKKTVLFPSIMR.

At S399 the chain carries Phosphoserine.

Belongs to the metallo-dependent hydrolases superfamily. Adenine deaminase family.

The enzyme catalyses adenine + H2O + H(+) = hypoxanthine + NH4(+). This Bacillus subtilis (strain 168) protein is Putative adenine deaminase YerA (yerA).